We begin with the raw amino-acid sequence, 305 residues long: Elongation factor Ts (305 aa).

An involved in Mg(2+) ion dislocation from EF-Tu region spans residues 81–84; it reads TDFV.

Belongs to the EF-Ts family.

The protein resides in the cytoplasm. Functionally, associates with the EF-Tu.GDP complex and induces the exchange of GDP to GTP. It remains bound to the aminoacyl-tRNA.EF-Tu.GTP complex up to the GTP hydrolysis stage on the ribosome. The chain is Elongation factor Ts from Nitratiruptor sp. (strain SB155-2).